Here is a 349-residue protein sequence, read N- to C-terminus: Homeobox protein engrailed (349 aa).

Disordered stretches follow at residues aspartate 26 to serine 53, glycine 146 to proline 210, proline 228 to proline 252, and serine 327 to glutamate 349. 2 stretches are compositionally biased toward basic and acidic residues: residues glutamine 173–serine 188 and aspartate 242–proline 252. Positions glutamate 249–serine 308 form a DNA-binding region, homeobox.

It belongs to the engrailed homeobox family.

It is found in the nucleus. The chain is Homeobox protein engrailed from Artemia franciscana (Brine shrimp).